A 147-amino-acid chain; its full sequence is MTLLSAEENAHVTSLWGKVDVEKVGGEALGRLLVVYPWTQRFFESFGDLSSPSAVMGNPKVKAHGKKVLSAFSEGLHHLDNLKGTFAQLSELHCDKLHVDPQNFTLLGNVLVVVLAEHFGNAFSPAVQAAFQKVVAGVANALAHKYH.

A Globin domain is found at 3–147 (LLSAEENAHV…VANALAHKYH (145 aa)). Residue Thr13 is modified to Phosphothreonine. Ser45 is modified (phosphoserine). Lys60 bears the N6-acetyllysine mark. Residue His64 participates in heme b binding. Lys83 is modified (N6-acetyllysine). Position 93 (His93) interacts with heme b. Cys94 carries the post-translational modification S-nitrosocysteine. Lys145 is modified (N6-acetyllysine).

The protein belongs to the globin family. As to quaternary structure, heterotetramer of two alpha chains and two beta chains. As to expression, red blood cells.

Involved in oxygen transport from the lung to the various peripheral tissues. This chain is Hemoglobin subunit beta (HBB), found in Eulemur fulvus fulvus (Brown lemur).